The chain runs to 155 residues: Ribosomal RNA large subunit methyltransferase H (155 aa).

S-adenosyl-L-methionine-binding positions include leucine 72, glycine 103, and 122 to 127 (LSPLTL).

It belongs to the RNA methyltransferase RlmH family. In terms of assembly, homodimer.

The protein localises to the cytoplasm. The catalysed reaction is pseudouridine(1915) in 23S rRNA + S-adenosyl-L-methionine = N(3)-methylpseudouridine(1915) in 23S rRNA + S-adenosyl-L-homocysteine + H(+). Functionally, specifically methylates the pseudouridine at position 1915 (m3Psi1915) in 23S rRNA. This is Ribosomal RNA large subunit methyltransferase H from Pasteurella multocida (strain Pm70).